Here is a 382-residue protein sequence, read N- to C-terminus: Succinyl-diaminopimelate desuccinylase (382 aa).

A Zn(2+)-binding site is contributed by histidine 73. Aspartate 75 is a catalytic residue. Aspartate 106 is a binding site for Zn(2+). Catalysis depends on glutamate 140, which acts as the Proton acceptor. Zn(2+)-binding residues include glutamate 141, glutamate 169, and histidine 355.

Belongs to the peptidase M20A family. DapE subfamily. In terms of assembly, homodimer. Zn(2+) is required as a cofactor. It depends on Co(2+) as a cofactor.

The enzyme catalyses N-succinyl-(2S,6S)-2,6-diaminopimelate + H2O = (2S,6S)-2,6-diaminopimelate + succinate. The protein operates within amino-acid biosynthesis; L-lysine biosynthesis via DAP pathway; LL-2,6-diaminopimelate from (S)-tetrahydrodipicolinate (succinylase route): step 3/3. Functionally, catalyzes the hydrolysis of N-succinyl-L,L-diaminopimelic acid (SDAP), forming succinate and LL-2,6-diaminopimelate (DAP), an intermediate involved in the bacterial biosynthesis of lysine and meso-diaminopimelic acid, an essential component of bacterial cell walls. In Leptothrix cholodnii (strain ATCC 51168 / LMG 8142 / SP-6) (Leptothrix discophora (strain SP-6)), this protein is Succinyl-diaminopimelate desuccinylase.